A 421-amino-acid polypeptide reads, in one-letter code: Shaggy-related protein kinase kappa (421 aa).

Over residues 1–10 the composition is skewed to gly residues; that stretch reads MASSGLGNGV. The tract at residues 1-60 is disordered; the sequence is MASSGLGNGVGTSRSAKGLKSSSSSVDWLTRDLAETRIRDKVETDDERDSEPDIIDGAGA. Over residues 29 to 42 the composition is skewed to basic and acidic residues; it reads LTRDLAETRIRDKV. A compositionally biased stretch (acidic residues) spans 43-54; it reads ETDDERDSEPDI. The region spanning 83 to 367 is the Protein kinase domain; that stretch reads YISEHVVGTG…ALEACIHPLF (285 aa). Residues 89–97 and Lys-112 each bind ATP; that span reads VGTGSFGMV. The Proton acceptor role is filled by Asp-208. Position 243 is a phosphotyrosine (Tyr-243).

The protein belongs to the protein kinase superfamily. CMGC Ser/Thr protein kinase family. GSK-3 subfamily. In terms of processing, autophosphorylated mainly on threonine and serine residues. As to expression, expressed exclusively in inflorescences.

The catalysed reaction is L-seryl-[protein] + ATP = O-phospho-L-seryl-[protein] + ADP + H(+). It catalyses the reaction L-threonyl-[protein] + ATP = O-phospho-L-threonyl-[protein] + ADP + H(+). May mediate extracellular signals to regulate transcription in differentiating cells. The sequence is that of Shaggy-related protein kinase kappa (ASK10) from Arabidopsis thaliana (Mouse-ear cress).